Consider the following 450-residue polypeptide: Signal recognition particle protein (450 aa).

GTP-binding positions include 106-113 (GLQGSGKT), 188-192 (DTAGR), and 246-249 (TKLD).

Belongs to the GTP-binding SRP family. SRP54 subfamily. As to quaternary structure, part of the signal recognition particle protein translocation system, which is composed of SRP and FtsY.

Its subcellular location is the cytoplasm. It carries out the reaction GTP + H2O = GDP + phosphate + H(+). Involved in targeting and insertion of nascent membrane proteins into the cytoplasmic membrane. Binds to the hydrophobic signal sequence of the ribosome-nascent chain (RNC) as it emerges from the ribosomes. The SRP-RNC complex is then targeted to the cytoplasmic membrane where it interacts with the SRP receptor FtsY. This chain is Signal recognition particle protein, found in Mycoplasma pneumoniae (strain ATCC 29342 / M129 / Subtype 1) (Mycoplasmoides pneumoniae).